A 257-amino-acid chain; its full sequence is Glutamate racemase (257 aa).

Substrate-binding positions include 12-13 (DS) and 44-45 (YG). The active-site Proton donor/acceptor is the Cys-75. Substrate is bound at residue 76 to 77 (NT). Cys-185 serves as the catalytic Proton donor/acceptor. Residue 186–187 (TH) coordinates substrate.

Belongs to the aspartate/glutamate racemases family.

It catalyses the reaction L-glutamate = D-glutamate. It functions in the pathway cell wall biogenesis; peptidoglycan biosynthesis. Functionally, provides the (R)-glutamate required for cell wall biosynthesis. This chain is Glutamate racemase, found in Clostridium botulinum (strain Langeland / NCTC 10281 / Type F).